We begin with the raw amino-acid sequence, 271 residues long: MFPYVTDYSGFAIRKWMIDNVDVAGFLCLLYLGLVWKGPGVVKSLREKNLINATLLQGVFIMWNLFLSTFSVIGMIVVVPAAIAHISNKGLVPALCERDVNMIYDSPVGFWVGVFALSKIPELFDTVLLVLQGKQPPFLHWYHHTTVLIFSWQSYCEGSSTIFVFVAMNLTVHAVMYFYFAMCASGFKAIMRTIAPVITIMQILQMIVGSAVTMYSAYVLYNPQPDGPQTCDVTKASARMGVVMYLSYLYLFAALFVESYLKPKKRTEKSK.

A helical membrane pass occupies residues 16–36 (WMIDNVDVAGFLCLLYLGLVW). A glycan (N-linked (GlcNAc...) asparagine) is linked at Asn52. The next 2 helical transmembrane spans lie at 59 to 79 (VFIM…IVVV) and 110 to 130 (FWVG…VLLV). Residues 140 to 144 (HWYHH) carry the HxxHH motif motif. The Nucleophile role is filled by His143. 3 helical membrane passes run 162–182 (IFVF…YFAM), 194–214 (IAPV…AVTM), and 241–261 (GVVM…ESYL).

Belongs to the ELO family.

Its subcellular location is the endoplasmic reticulum membrane. The catalysed reaction is an acyl-CoA + malonyl-CoA + H(+) = a 3-oxoacyl-CoA + CO2 + CoA. It functions in the pathway lipid metabolism; fatty acid biosynthesis. Functionally, involved in the synthesis of fatty acids. Elongates C10 fatty acids to C14. The sequence is that of Fatty acid elongase 2 from Trypanosoma brucei brucei (strain 927/4 GUTat10.1).